The primary structure comprises 83 residues: Beta-defensin 19 (83 aa).

The N-terminal stretch at 1–19 (MRLALLLLAILVATELVVS) is a signal peptide. Intrachain disulfides connect C27/C54, C34/C48, and C38/C55.

It belongs to the beta-defensin family. Specifically expressed in male gonads (Sertoli cells).

It is found in the secreted. Functionally, has antibacterial activity. The sequence is that of Beta-defensin 19 (Defb19) from Mus musculus (Mouse).